Consider the following 610-residue polypeptide: Zinc metalloproteinase-disintegrin-like VAP1 (610 aa).

A signal peptide spans 1 to 20 (MIQVLLVTISLAVFPYQGSS). Residues 21-189 (VILESGNVND…KKASQSNLTP (169 aa)) constitute a propeptide that is removed on maturation. Residue Glu190 is modified to Pyrrolidone carboxylic acid (Glu). In terms of domain architecture, Peptidase M12B spans 199-395 (KYVKLFLVAD…NMPQCILKKP (197 aa)). Asn218 carries N-linked (GlcNAc...) asparagine glycosylation. Intrachain disulfides connect Cys310-Cys390, Cys350-Cys374, and Cys352-Cys357. Position 335 (His335) interacts with Zn(2+). Residues 335 to 346 (HEMGHNLGMDHD) carry the Metal-binding motif. Glu336 functions as the Proton acceptor in the catalytic mechanism. Zn(2+) contacts are provided by His339 and His345. The Disintegrin domain maps to 403–488 (PAVCGNYFVE…AECTDRFQRN (86 aa)). Positions 405, 408, 410, 412, 415, and 418 each coordinate Ca(2+). Cystine bridges form between Cys406/Cys435, Cys417/Cys430, Cys419/Cys425, Cys429/Cys452, Cys443/Cys449, Cys448/Cys474, Cys461/Cys481, Cys468/Cys499, Cys492/Cys504, Cys511/Cys561, Cys526/Cys572, Cys539/Cys549, Cys556/Cys598, and Cys592/Cys603. Residues 467–469 (ECD) carry the D/ECD-tripeptide motif. Ca(2+) contacts are provided by Asp469, Met470, Asp472, Asp483, and Arg484.

Belongs to the venom metalloproteinase (M12B) family. P-III subfamily. P-IIIc sub-subfamily. Homodimer; disulfide-linked. It depends on Zn(2+) as a cofactor. The N-terminus is blocked. As to expression, expressed by the venom gland.

Its subcellular location is the secreted. With respect to regulation, inhibited by EDTA and EGTA, but not by PMSF. In terms of biological role, zinc metalloprotease that has fibrinogenolytic and hemorrhagic activities. It induces apoptosis in vascular endothelial cells (VEC), without degrading extracellular matrix (it cannot cleave collagen) or inhibiting adhesion of VEC. VAP1-induced apoptosis is inhibited by antibodies for integrin alpha-3, alpha-6, beta-1 and CD9. Apoptosis is accompanied by severe cell fragmentation, which is controlled by caspases. The protein is Zinc metalloproteinase-disintegrin-like VAP1 of Crotalus atrox (Western diamondback rattlesnake).